We begin with the raw amino-acid sequence, 441 residues long: uncharacterized protein (441 aa).

An ATP-binding site is contributed by 57-64 (GVRRGGKT).

This is an uncharacterized protein from Methanocaldococcus jannaschii (strain ATCC 43067 / DSM 2661 / JAL-1 / JCM 10045 / NBRC 100440) (Methanococcus jannaschii).